A 476-amino-acid chain; its full sequence is Ribulose bisphosphate carboxylase large chain (476 aa).

Residues 1 to 2 constitute a propeptide that is removed on maturation; the sequence is MS. P3 carries the N-acetylproline modification. Position 14 is an N6,N6,N6-trimethyllysine (K14). Residues N123 and T173 each contribute to the substrate site. K175 (proton acceptor) is an active-site residue. Residue K177 participates in substrate binding. The Mg(2+) site is built by K201, D203, and E204. K201 is subject to N6-carboxylysine. Residue H294 is the Proton acceptor of the active site. Substrate contacts are provided by R295, H327, and S379.

It belongs to the RuBisCO large chain family. Type I subfamily. As to quaternary structure, heterohexadecamer of 8 large chains and 8 small chains; disulfide-linked. The disulfide link is formed within the large subunit homodimers. Requires Mg(2+) as cofactor. The disulfide bond which can form in the large chain dimeric partners within the hexadecamer appears to be associated with oxidative stress and protein turnover.

It is found in the plastid. The protein resides in the chloroplast. It carries out the reaction 2 (2R)-3-phosphoglycerate + 2 H(+) = D-ribulose 1,5-bisphosphate + CO2 + H2O. The enzyme catalyses D-ribulose 1,5-bisphosphate + O2 = 2-phosphoglycolate + (2R)-3-phosphoglycerate + 2 H(+). Its function is as follows. RuBisCO catalyzes two reactions: the carboxylation of D-ribulose 1,5-bisphosphate, the primary event in carbon dioxide fixation, as well as the oxidative fragmentation of the pentose substrate in the photorespiration process. Both reactions occur simultaneously and in competition at the same active site. This chain is Ribulose bisphosphate carboxylase large chain, found in Arenaria drummondii (Drummond sandwort).